A 142-amino-acid chain; its full sequence is Large ribosomal subunit protein uL13 (142 aa).

The protein belongs to the universal ribosomal protein uL13 family. Part of the 50S ribosomal subunit.

Functionally, this protein is one of the early assembly proteins of the 50S ribosomal subunit, although it is not seen to bind rRNA by itself. It is important during the early stages of 50S assembly. The protein is Large ribosomal subunit protein uL13 of Bordetella avium (strain 197N).